A 63-amino-acid polypeptide reads, in one-letter code: ATP synthase subunit epsilon, mitochondrial (63 aa).

F-type ATP synthases have 2 components, the catalytic core F(1) and the membrane-embedded component F(0), linked together by a central stalk and a peripheral stalk. The central stalk, also called rotor shaft, is often seen as part of F(1). The peripheral stalk is seen as part of F(0). F(0) contains the membrane channel next to the rotor. F-type ATP synthases form dimers but each monomer functions independently in ATP generation. The dimer consists of 18 different polypeptides: ATP1 (subunit alpha, part of F(1), 3 molecules per monomer), ATP2 (subunit beta, part of F(1), 3 molecules per monomer), ATP3 (subunit gamma, part of the central stalk), ATP4 (subunit b, part of the peripheral stalk), ATP5/OSCP (subunit 5/OSCP, part of the peripheral stalk), ATP6 (subunit a, part of the peripheral stalk), ATP7 (subunit d, part of the peripheral stalk), ATP8 (subunit 8, part of the peripheral stalk), OLI1 (subunit c, part of the rotor, 10 molecules per monomer), ATP14 (subunit h, part of the peripheral stalk), ATP15 (subunit epsilon, part of the central stalk), ATP16 (subunit delta, part of the central stalk), ATP17 (subunit f, part of the peripheral stalk), ATP18 (subunit i/j, part of the peripheral stalk). Dimer-specific subunits are ATP19 (subunit k, at interface between monomers), ATP20 (subunit g, at interface between monomers), TIM11 (subunit e, at interface between monomers). Also contains subunit L.

The protein resides in the mitochondrion inner membrane. Functionally, mitochondrial membrane ATP synthase (F(1)F(0) ATP synthase or Complex V) produces ATP from ADP in the presence of a proton gradient across the membrane which is generated by electron transport complexes of the respiratory chain. F-type ATP synthases consist of two structural domains, F(1) - containing the extramembraneous catalytic core, and F(0) - containing the membrane proton channel, linked together by a central stalk and a peripheral stalk. During catalysis, ATP synthesis in the catalytic domain of F(1) is coupled via a rotary mechanism of the central stalk subunits to proton translocation. Part of the complex F(1) domain and the central stalk which is part of the complex rotary element. Rotation of the central stalk against the surrounding alpha/ATP1(3)beta/ATP2(3) subunits leads to hydrolysis of ATP in three separate catalytic sites on the beta/ATP2 subunits. The sequence is that of ATP synthase subunit epsilon, mitochondrial from Pichia angusta (Yeast).